A 935-amino-acid polypeptide reads, in one-letter code: Potassium channel AKT1 (935 aa).

Residues 1 to 106 lie on the Cytoplasmic side of the membrane; sequence MARWGAARMA…YDRRYRIWET (106 aa). The helical transmembrane segment at 107–127 threads the bilayer; that stretch reads FLIVLVVYSAWVSPFEFGFIP. Residues 128–136 lie on the Extracellular side of the membrane; the sequence is KPTGALATA. Residues 137–157 form a helical membrane-spanning segment; it reads DNVVNAFFAVDIILTFFVAYL. At 158–178 the chain is on the cytoplasmic side; it reads DKMSYMLEDDPKKIAWRYSTT. A helical transmembrane segment spans residues 179–199; it reads WLVLDVASTIPSEFARRILPS. Residues 200–205 lie on the Extracellular side of the membrane; sequence KLRSYG. Residues 206 to 226 traverse the membrane as a helical; Voltage-sensor segment; it reads FFNMLRLWRLRRVSSLFSRLE. Residues 227 to 240 are Cytoplasmic-facing; that stretch reads KDRHFNYFWVRCAK. Residues 241 to 261 traverse the membrane as a helical segment; it reads LICVTLFAVHCAACFYYLLAD. The Extracellular segment spans residues 262–288; sequence RYPVPTSTWIGNYMADFHERSLWIRYV. Residues 289-308 constitute an intramembrane region (pore-forming); that stretch reads TSVYWSITTLTTVGYGDLHA. The Extracellular segment spans residues 309 to 312; it reads ENTR. A helical membrane pass occupies residues 313-333; the sequence is EMIFNIFYMLFNLGLTAYLIG. The Cytoplasmic segment spans residues 334–935; it reads NMTNLVVHGT…WDAEKMKGKS (602 aa). 419–538 contacts a nucleoside 3',5'-cyclic phosphate; it reads LFQGVSNDLI…TIIMNNLIQF (120 aa). ANK repeat units follow at residues 565–594, 598–627, 631–660, 662–691, 695–724, and 728–757; these read DLPI…DPNE, DGHT…DPNA, EGKV…DLSS, DTGL…DVNR, DGTT…DIDK, and NGWT…ATAS. Positions 826–854 are disordered; sequence SQAQRETDHPLSRGGLAATGSPNPSSGSR. Residues 845–854 show a composition bias toward polar residues; it reads GSPNPSSGSR. A KHA domain is found at 859–935; that stretch reads RVTISCPEKG…WDAEKMKGKS (77 aa).

The protein belongs to the potassium channel family. Plant (TC 1.A.1.4) subfamily. As to quaternary structure, the potassium channel is probably a homo- or heterotetrameric complex of pore-forming subunits. Expressed in roots and coleoptile of young seedlings.

The protein resides in the membrane. In terms of biological role, highly selective inward-rectifying potassium channel that mediates potassium uptake by plant roots. Assuming opened or closed conformations in response to the voltage difference across the membrane, the channel is activated by hyperpolarization. May be a major salt-sensitive potassium channel in roots. The chain is Potassium channel AKT1 (AKT1) from Oryza sativa subsp. japonica (Rice).